A 128-amino-acid polypeptide reads, in one-letter code: Cytochrome c-type biogenesis protein CcmE (128 aa).

The Cytoplasmic segment spans residues 1–8 (MQKRVRNR). Residues 9–29 (LITIIICFCSACLGISIILYN) traverse the membrane as a helical; Signal-anchor for type II membrane protein segment. The Periplasmic segment spans residues 30–128 (LEKNIVFFLP…KHDENYRPPQ (99 aa)). Heme-binding residues include histidine 120 and tyrosine 124.

This sequence belongs to the CcmE/CycJ family.

The protein resides in the cell inner membrane. In terms of biological role, heme chaperone required for the biogenesis of c-type cytochromes. Transiently binds heme delivered by CcmC and transfers the heme to apo-cytochromes in a process facilitated by CcmF and CcmH. The chain is Cytochrome c-type biogenesis protein CcmE from Rickettsia peacockii (strain Rustic).